A 565-amino-acid chain; its full sequence is Proline--tRNA ligase (565 aa).

It belongs to the class-II aminoacyl-tRNA synthetase family. ProS type 1 subfamily. As to quaternary structure, homodimer.

The protein resides in the cytoplasm. The catalysed reaction is tRNA(Pro) + L-proline + ATP = L-prolyl-tRNA(Pro) + AMP + diphosphate. In terms of biological role, catalyzes the attachment of proline to tRNA(Pro) in a two-step reaction: proline is first activated by ATP to form Pro-AMP and then transferred to the acceptor end of tRNA(Pro). As ProRS can inadvertently accommodate and process non-cognate amino acids such as alanine and cysteine, to avoid such errors it has two additional distinct editing activities against alanine. One activity is designated as 'pretransfer' editing and involves the tRNA(Pro)-independent hydrolysis of activated Ala-AMP. The other activity is designated 'posttransfer' editing and involves deacylation of mischarged Ala-tRNA(Pro). The misacylated Cys-tRNA(Pro) is not edited by ProRS. This chain is Proline--tRNA ligase, found in Francisella tularensis subsp. holarctica (strain FTNF002-00 / FTA).